We begin with the raw amino-acid sequence, 288 residues long: Thymidylate synthase (288 aa).

Residues Arg-21 and 150-151 (RR) each bind dUMP. The active-site Nucleophile is the Cys-170. Residues 190 to 193 (RSGD), Asn-201, and 231 to 233 (HIY) each bind dUMP. A (6R)-5,10-methylene-5,6,7,8-tetrahydrofolate-binding site is contributed by Asp-193. Residue Ala-287 participates in (6R)-5,10-methylene-5,6,7,8-tetrahydrofolate binding.

Belongs to the thymidylate synthase family. Bacterial-type ThyA subfamily. Homodimer.

The protein resides in the cytoplasm. It carries out the reaction dUMP + (6R)-5,10-methylene-5,6,7,8-tetrahydrofolate = 7,8-dihydrofolate + dTMP. It functions in the pathway pyrimidine metabolism; dTTP biosynthesis. Its function is as follows. Catalyzes the reductive methylation of 2'-deoxyuridine-5'-monophosphate (dUMP) to 2'-deoxythymidine-5'-monophosphate (dTMP) while utilizing 5,10-methylenetetrahydrofolate (mTHF) as the methyl donor and reductant in the reaction, yielding dihydrofolate (DHF) as a by-product. This enzymatic reaction provides an intracellular de novo source of dTMP, an essential precursor for DNA biosynthesis. This is Thymidylate synthase from Acholeplasma laidlawii (strain PG-8A).